A 516-amino-acid polypeptide reads, in one-letter code: Citrate synthase, glyoxysomal (516 aa).

The N-terminal 43 residues, 1–43 (MPTDMELSPSNVARHRLAVLAAHLSAASLEPPVMASSLEAHCV), are a transit peptide targeting the glyoxysome. Active-site residues include H329, H368, and D424.

It belongs to the citrate synthase family.

It is found in the glyoxysome. It carries out the reaction oxaloacetate + acetyl-CoA + H2O = citrate + CoA + H(+). It functions in the pathway carbohydrate metabolism; glyoxylate cycle; isocitrate from oxaloacetate: step 1/2. The sequence is that of Citrate synthase, glyoxysomal from Cucurbita maxima (Pumpkin).